The chain runs to 109 residues: Large ribosomal subunit protein uL22 (109 aa).

This sequence belongs to the universal ribosomal protein uL22 family. In terms of assembly, part of the 50S ribosomal subunit.

Its function is as follows. This protein binds specifically to 23S rRNA; its binding is stimulated by other ribosomal proteins, e.g. L4, L17, and L20. It is important during the early stages of 50S assembly. It makes multiple contacts with different domains of the 23S rRNA in the assembled 50S subunit and ribosome. The globular domain of the protein is located near the polypeptide exit tunnel on the outside of the subunit, while an extended beta-hairpin is found that lines the wall of the exit tunnel in the center of the 70S ribosome. The chain is Large ribosomal subunit protein uL22 from Bordetella avium (strain 197N).